Consider the following 263-residue polypeptide: Adaptin ear-binding coat-associated protein 2 (263 aa).

Disordered stretches follow at residues 167-191 (KKEG…LPPP) and 209-263 (GGSL…WVQF). Residue Ser-181 is modified to Phosphoserine. 2 consecutive short sequence motifs (WXXF motif) follow at residues 218–221 (GSGG) and 238–241 (DIWG). Residues 246 to 263 (STGSPSSQSQPGTGWVQF) show a composition bias toward low complexity.

Belongs to the NECAP family. Interacts with AP1G1 and AP2A1 components of the adapter protein complexes AP-1 and AP-2. Interacts with the GAE domain proteins GGA1, GGA2 and GGA3. As to expression, expressed in brain, heart, kidney, liver and lung (at protein level).

It localises to the cytoplasmic vesicle. It is found in the clathrin-coated vesicle membrane. Its subcellular location is the cell membrane. Functionally, involved in endocytosis. This chain is Adaptin ear-binding coat-associated protein 2 (Necap2), found in Rattus norvegicus (Rat).